The following is a 967-amino-acid chain: Importin-alpha re-exporter (967 aa).

In terms of domain architecture, Importin N-terminal spans 20–95 (AEEALKVWEL…KREIINLMLK (76 aa)).

Belongs to the XPO2/CSE1 family. In terms of assembly, binds with high affinity to importin-alpha only in the presence of RanGTP.

The protein resides in the cytoplasm. It localises to the nucleus envelope. Export receptor for importin alpha. Mediates importin-alpha re-export from the nucleus to the cytoplasm after import substrates have been released into the nucleoplasm. The polypeptide is Importin-alpha re-exporter (kap109) (Schizosaccharomyces pombe (strain 972 / ATCC 24843) (Fission yeast)).